The chain runs to 247 residues: tRNA pseudouridine synthase A (247 aa).

Asp53 acts as the Nucleophile in catalysis. Tyr111 is a substrate binding site.

The protein belongs to the tRNA pseudouridine synthase TruA family. In terms of assembly, homodimer.

It catalyses the reaction uridine(38/39/40) in tRNA = pseudouridine(38/39/40) in tRNA. Its function is as follows. Formation of pseudouridine at positions 38, 39 and 40 in the anticodon stem and loop of transfer RNAs. This chain is tRNA pseudouridine synthase A, found in Bacillus velezensis (strain DSM 23117 / BGSC 10A6 / LMG 26770 / FZB42) (Bacillus amyloliquefaciens subsp. plantarum).